Consider the following 412-residue polypeptide: L-cysteine:1D-myo-inositol 2-amino-2-deoxy-alpha-D-glucopyranoside ligase (412 aa).

Cysteine 43 contacts Zn(2+). L-cysteinyl-5'-AMP contacts are provided by residues 43-46 (CGIT), threonine 58, and 81-83 (NVT). A 'HIGH' region motif is present at residues 45–55 (ITPYDATHLGH). Residues 186–191 (ERGGDP) carry the 'ERGGDP' region motif. Tryptophan 227 contributes to the L-cysteinyl-5'-AMP binding site. Position 231 (cysteine 231) interacts with Zn(2+). Position 249–251 (249–251 (GND)) interacts with L-cysteinyl-5'-AMP. Position 256 (histidine 256) interacts with Zn(2+). Isoleucine 283 is an L-cysteinyl-5'-AMP binding site. The short motif at 289-293 (KMSKS) is the 'KMSKS' region element.

It belongs to the class-I aminoacyl-tRNA synthetase family. MshC subfamily. As to quaternary structure, monomer. The cofactor is Zn(2+).

It catalyses the reaction 1D-myo-inositol 2-amino-2-deoxy-alpha-D-glucopyranoside + L-cysteine + ATP = 1D-myo-inositol 2-(L-cysteinylamino)-2-deoxy-alpha-D-glucopyranoside + AMP + diphosphate + H(+). In terms of biological role, catalyzes the ATP-dependent condensation of GlcN-Ins and L-cysteine to form L-Cys-GlcN-Ins. This chain is L-cysteine:1D-myo-inositol 2-amino-2-deoxy-alpha-D-glucopyranoside ligase, found in Salinispora arenicola (strain CNS-205).